A 125-amino-acid polypeptide reads, in one-letter code: Glycine cleavage system H protein (125 aa).

Positions V22 to K104 constitute a Lipoyl-binding domain. K63 is subject to N6-lipoyllysine.

It belongs to the GcvH family. In terms of assembly, the glycine cleavage system is composed of four proteins: P, T, L and H. It depends on (R)-lipoate as a cofactor.

Its function is as follows. The glycine cleavage system catalyzes the degradation of glycine. The H protein shuttles the methylamine group of glycine from the P protein to the T protein. In Brucella abortus (strain 2308), this protein is Glycine cleavage system H protein.